Here is a 566-residue protein sequence, read N- to C-terminus: Ubiquitin carboxyl-terminal hydrolase 21 (566 aa).

Basic and acidic residues-rich tracts occupy residues 1–14 and 58–70; these read MPQASEHRLGRTRE and PPDERLKKLELGR. Disordered stretches follow at residues 1–103 and 146–169; these read MPQA…LPLP and PEPPTLRRSTSLRRLGGFPGPPTL. Composition is skewed to low complexity over residues 71 to 81 and 151 to 160; these read GRTSGSRPRGP and LRRSTSLRRL. Residues 134–152 carry the Nuclear export signal motif; that stretch reads ELGAALSRLALRPEPPTLR. The USP domain occupies 212–559; that stretch reads VGLRNLGNTC…EGYVLFYQLM (348 aa). Cys-221 (nucleophile) is an active-site residue. The tract at residues 324-349 is disordered; sequence APPILASGPVPSPPRRGGGALHEEPE. 4 residues coordinate Zn(2+): Cys-385, Cys-388, Cys-438, and Cys-441. His-519 (proton acceptor) is an active-site residue.

This sequence belongs to the peptidase C19 family. USP21 subfamily. Interacts with BEND3.

Its subcellular location is the cytoplasm. It is found in the nucleus. The catalysed reaction is Thiol-dependent hydrolysis of ester, thioester, amide, peptide and isopeptide bonds formed by the C-terminal Gly of ubiquitin (a 76-residue protein attached to proteins as an intracellular targeting signal).. Its function is as follows. Deubiquitinates histone H2A, a specific tag for epigenetic transcriptional repression, thereby acting as a coactivator. Deubiquitination of histone H2A releaves the repression of di- and trimethylation of histone H3 at 'Lys-4', resulting in regulation of transcriptional initiation. Regulates gene expression via histone H2A deubiquitination. Deubiquitinates BAZ2A/TIP5 leading to its stabilization. Also capable of removing NEDD8 from NEDD8 conjugates but has no effect on Sentrin-1 conjugates. Also acts as a negative regulator of the ribosome quality control (RQC) by mediating deubiquitination of 40S ribosomal proteins RPS10/eS10 and RPS20/uS10, thereby antagonizing ZNF598-mediated 40S ubiquitination. The protein is Ubiquitin carboxyl-terminal hydrolase 21 of Mus musculus (Mouse).